The sequence spans 396 residues: Activity-regulated cytoskeleton-associated protein (396 aa).

Residues 54 to 78 (SKQVERELKGLHRSVGKLENNLDGY) adopt a coiled-coil conformation. The interaction with SH3GL1 or SH3GL3 stretch occupies residues 89–100 (KSIKACLCRCQE). The interval 195-214 (QSWVPGEDGQPSPGVDTQIF) is interaction with DNM2. Residue S260 is modified to Phosphoserine. Residues K268 and K269 each participate in a glycyl lysine isopeptide (Lys-Gly) (interchain with G-Cter in ubiquitin) cross-link. T278 carries the phosphothreonine modification. A disordered region spans residues 358–396 (GLEQAAEPSVTPLPTEDETEALTPALTSESVASDRTQPE). A compositionally biased stretch (polar residues) spans 382-396 (ALTSESVASDRTQPE).

It belongs to the ARC/ARG3.1 family. In terms of assembly, homooligomer; homooligomerizes into virion-like capsids. Interacts with SH3GL1/endophilin-2, SH3GL3/endophilin-3 and DNM2/DYN2. Interacts with CAMK2B (in the kinase inactive state); leading to target ARC to inactive synapses. Interacts with PSEN1. Interacts with GRIN2A and GRIN2B; inhibiting homooligomerization. Post-translationally, palmitoylation anchors the protein into the membrane by allowing direct insertion into the hydrophobic core of the lipid bilayer. In terms of processing, ubiquitinated by UBE3A, leading to its degradation by the proteasome, thereby promoting AMPA receptors (AMPARs) expression at synapses. Ubiquitinated by RNF216 at Lys-268 and Lys-269 limiting ARC protein levels induced by synaptic activity and thus regulating ARC-dependent forms of synaptic plasticity. Phosphorylation at Ser-260 by CaMK2 prevents homooligomerization into virion-like capsids by disrupting an interaction surface essential for high-order oligomerization. Phosphorylation by CaMK2 inhibits synaptic activity. Expressed exclusively in certain parts of the brain including cortex and molecular layer of the hippocampus. Typically expressed at high level in a minority of neurons. Basal expression higher in cortex than in hippocampus, highest in visual cortex.

The protein localises to the extracellular vesicle membrane. It localises to the postsynaptic cell membrane. It is found in the synapse. Its subcellular location is the postsynaptic density. The protein resides in the early endosome membrane. The protein localises to the cell projection. It localises to the dendrite. It is found in the cytoplasm. Its subcellular location is the cytoskeleton. The protein resides in the cell cortex. The protein localises to the dendritic spine. It localises to the cytoplasmic vesicle. It is found in the secretory vesicle. Its subcellular location is the acrosome. The protein resides in the clathrin-coated vesicle membrane. Master regulator of synaptic plasticity that self-assembles into virion-like capsids that encapsulate RNAs and mediate intercellular RNA transfer in the nervous system. ARC protein is released from neurons in extracellular vesicles that mediate the transfer of ARC mRNA into new target cells, where ARC mRNA can undergo activity-dependent translation. ARC capsids are endocytosed and are able to transfer ARC mRNA into the cytoplasm of neurons. Acts as a key regulator of synaptic plasticity: required for protein synthesis-dependent forms of long-term potentiation (LTP) and depression (LTD) and for the formation of long-term memory. Regulates synaptic plasticity by promoting endocytosis of AMPA receptors (AMPARs) in response to synaptic activity: this endocytic pathway maintains levels of surface AMPARs in response to chronic changes in neuronal activity through synaptic scaling, thereby contributing to neuronal homeostasis. Acts as a postsynaptic mediator of activity-dependent synapse elimination in the developing cerebellum by mediating elimination of surplus climbing fiber synapses. Accumulates at weaker synapses, probably to prevent their undesired enhancement. This suggests that ARC-containing virion-like capsids may be required to eliminate synaptic material. Required to transduce experience into long-lasting changes in visual cortex plasticity and for long-term memory. Involved in postsynaptic trafficking and processing of amyloid-beta A4 (APP) via interaction with PSEN1. In addition to its role in synapses, also involved in the regulation of the immune system: specifically expressed in skin-migratory dendritic cells and regulates fast dendritic cell migration, thereby regulating T-cell activation. This chain is Activity-regulated cytoskeleton-associated protein, found in Rattus norvegicus (Rat).